The primary structure comprises 196 residues: Probable histone chaperone ASF1A (196 aa).

The span at 146–157 shows a compositional bias: basic and acidic residues; the sequence is VTKFPIDFHPEE. The tract at residues 146–196 is disordered; that stretch reads VTKFPIDFHPEEEQTAATAAPPEQSDEQQPNVNGEAQVLPDQSVEPKPEES.

It belongs to the ASF1 family. In terms of assembly, interacts with histone H3 and histone H4. Component of the HIRA complex made of UBN1, UBN2, ASF1A, CABIN1 and HIRA. Interacts with HIRA. In terms of tissue distribution, expressed in leaves and flower buds.

Its subcellular location is the nucleus. The protein localises to the nucleolus. Functionally, histone chaperone that facilitates histone deposition and histone exchange and removal during nucleosome assembly and disassembly. While encoded by a region of the Arabidopsis thaliana genome that is homologous to the Brassica S-locus for self incompatibility, this protein may not play the same role in Arabidopsis thaliana. The protein is Probable histone chaperone ASF1A (ASF1A) of Arabidopsis thaliana (Mouse-ear cress).